The chain runs to 265 residues: Uridylate kinase (265 aa).

The disordered stretch occupies residues 1–29 (MTESREPHVAGSAAPRPEPANGLASGQPS). An ATP-binding site is contributed by 40 to 43 (KLGG). Position 81 (glycine 81) interacts with UMP. Residues glycine 82 and arginine 86 each coordinate ATP. UMP is bound by residues aspartate 101 and 162 to 169 (MGLPYFST). Residues phenylalanine 195 and aspartate 198 each coordinate ATP.

This sequence belongs to the UMP kinase family. Homohexamer.

It is found in the cytoplasm. The enzyme catalyses UMP + ATP = UDP + ADP. Its pathway is pyrimidine metabolism; CTP biosynthesis via de novo pathway; UDP from UMP (UMPK route): step 1/1. Inhibited by UTP. In terms of biological role, catalyzes the reversible phosphorylation of UMP to UDP. The sequence is that of Uridylate kinase from Mycobacterium avium (strain 104).